The chain runs to 124 residues: UPF0102 protein TM1040_0449 (124 aa).

The protein belongs to the UPF0102 family.

The chain is UPF0102 protein TM1040_0449 from Ruegeria sp. (strain TM1040) (Silicibacter sp.).